The primary structure comprises 308 residues: Pseudouridine-5'-phosphate glycosidase (308 aa).

Glu-29 acts as the Proton donor in catalysis. Positions 90 and 110 each coordinate substrate. Position 142 (Asp-142) interacts with Mn(2+). A substrate-binding site is contributed by 144 to 146 (SSD). The active-site Nucleophile is the Lys-163.

Belongs to the pseudouridine-5'-phosphate glycosidase family. Homotrimer. Requires Mn(2+) as cofactor.

The catalysed reaction is D-ribose 5-phosphate + uracil = psi-UMP + H2O. Its function is as follows. Catalyzes the reversible cleavage of pseudouridine 5'-phosphate (PsiMP) to ribose 5-phosphate and uracil. Functions biologically in the cleavage direction, as part of a pseudouridine degradation pathway. In Serratia proteamaculans (strain 568), this protein is Pseudouridine-5'-phosphate glycosidase.